The chain runs to 202 residues: Glycerol-3-phosphate acyltransferase (202 aa).

The next 6 helical transmembrane spans lie at 2–22, 54–74, 85–105, 120–140, 141–161, and 162–182; these read MIVV…GYVI, FIVT…PIWF, FFTH…YPIY, VVLG…FGVL, YIFK…VIGS, and LIIQ…ILIV.

This sequence belongs to the PlsY family. Probably interacts with PlsX.

It localises to the cell membrane. It catalyses the reaction an acyl phosphate + sn-glycerol 3-phosphate = a 1-acyl-sn-glycero-3-phosphate + phosphate. It participates in lipid metabolism; phospholipid metabolism. Functionally, catalyzes the transfer of an acyl group from acyl-phosphate (acyl-PO(4)) to glycerol-3-phosphate (G3P) to form lysophosphatidic acid (LPA). This enzyme utilizes acyl-phosphate as fatty acyl donor, but not acyl-CoA or acyl-ACP. The polypeptide is Glycerol-3-phosphate acyltransferase (Staphylococcus haemolyticus (strain JCSC1435)).